Consider the following 920-residue polypeptide: Bcl-2-associated transcription factor 1 (920 aa).

The disordered stretch occupies residues M1 to K437. Basic residues predominate over residues S23–S46. The segment covering R47 to N63 has biased composition (basic and acidic residues). Basic residues predominate over residues R87–R134. Phosphoserine occurs at positions 102 and 104. Residues S135–P154 show a composition bias toward low complexity. Residue K152 is modified to N6-acetyllysine. A compositionally biased stretch (basic and acidic residues) spans G160 to S196. Residues S177 and S181 each carry the phosphoserine modification. K188 is covalently cross-linked (Glycyl lysine isopeptide (Lys-Gly) (interchain with G-Cter in SUMO2)). S196 and S198 each carry phosphoserine. Y219 is subject to Phosphotyrosine. Residues S222, S259, S262, S264, and S268 each carry the phosphoserine modification. Y284 carries the post-translational modification Phosphotyrosine. Residues S285, S290, S297, S300, and S315 each carry the phosphoserine modification. K332 is modified (N6-acetyllysine; alternate). K332 participates in a covalent cross-link: Glycyl lysine isopeptide (Lys-Gly) (interchain with G-Cter in SUMO2); alternate. Residue R339 is modified to Phosphoserine. Phosphothreonine is present on residues T341 and T355. A compositionally biased stretch (basic and acidic residues) spans G353–G373. Y383 bears the Phosphotyrosine mark. Over residues F384 to D396 the composition is skewed to basic and acidic residues. Residues S385, S389, and S397 each carry the phosphoserine modification. Acidic residues predominate over residues S397–E406. Residue T402 is modified to Phosphothreonine. Residue K413 forms a Glycyl lysine isopeptide (Lys-Gly) (interchain with G-Cter in SUMO2) linkage. At K421 the chain carries N6-acetyllysine; alternate. A Glycyl lysine isopeptide (Lys-Gly) (interchain with G-Cter in SUMO2); alternate cross-link involves residue K421. S422 and S427 each carry phosphoserine. At T431 the chain carries Phosphothreonine. K437 carries the N6-acetyllysine; alternate modification. Residue K437 forms a Glycyl lysine isopeptide (Lys-Gly) (interchain with G-Cter in SUMO2); alternate linkage. S450 carries the phosphoserine modification. Residues K457 and K462 each participate in a glycyl lysine isopeptide (Lys-Gly) (interchain with G-Cter in SUMO2) cross-link. Positions T464–S502 are disordered. At S472 the chain carries Phosphoserine. Positions S472–S502 are enriched in basic and acidic residues. K475 bears the N6-acetyllysine mark. Glycyl lysine isopeptide (Lys-Gly) (interchain with G-Cter in SUMO2) cross-links involve residues K491 and K492. T494 carries the post-translational modification Phosphothreonine. Position 496 is a phosphoserine (S496). K501 is covalently cross-linked (Glycyl lysine isopeptide (Lys-Gly) (interchain with G-Cter in SUMO2)). S502, S512, S525, and S531 each carry phosphoserine. Glycyl lysine isopeptide (Lys-Gly) (interchain with G-Cter in SUMO2) cross-links involve residues K536, K548, and K550. S559 and S564 each carry phosphoserine. T566 carries the phosphothreonine modification. A Glycyl lysine isopeptide (Lys-Gly) (interchain with G-Cter in SUMO2) cross-link involves residue K567. Position 578 is a phosphoserine (S578). K580 is covalently cross-linked (Glycyl lysine isopeptide (Lys-Gly) (interchain with G-Cter in SUMO2); alternate). A Glycyl lysine isopeptide (Lys-Gly) (interchain with G-Cter in SUMO1); alternate cross-link involves residue K580. Glycyl lysine isopeptide (Lys-Gly) (interchain with G-Cter in SUMO2) cross-links involve residues K593, K599, and K622. Residues K637–R796 form a disordered region. The segment covering A638–D656 has biased composition (basic and acidic residues). Residues S648, S658, and S660 each carry the phosphoserine modification. Residue T661 is modified to Phosphothreonine. Over residues L668–R750 the composition is skewed to basic and acidic residues. A Glycyl lysine isopeptide (Lys-Gly) (interchain with G-Cter in SUMO2) cross-link involves residue K676. Residues S690 and S760 each carry the phosphoserine modification. A compositionally biased stretch (low complexity) spans S751 to S762. Residues S763–E785 are compositionally biased toward basic and acidic residues. Glycyl lysine isopeptide (Lys-Gly) (interchain with G-Cter in SUMO2) cross-links involve residues K778 and K784. Position 803 is a citrulline (R803). R809 is modified (omega-N-methylarginine). The segment covering G810–T825 has biased composition (low complexity). Disordered regions lie at residues G810 to T840 and R862 to E920. A Glycyl lysine isopeptide (Lys-Gly) (interchain with G-Cter in SUMO2); alternate cross-link involves residue K831. K831 participates in a covalent cross-link: Glycyl lysine isopeptide (Lys-Gly) (interchain with G-Cter in SUMO1); alternate. The span at I897–N907 shows a compositional bias: acidic residues. Residues N908 to E920 show a composition bias toward basic and acidic residues. K911 participates in a covalent cross-link: Glycyl lysine isopeptide (Lys-Gly) (interchain with G-Cter in SUMO2).

This sequence belongs to the BCLAF1/THRAP3 family. In terms of assembly, interacts with Bcl-2 related proteins, EMD, with the adenovirus E1B 19 kDa protein and with DNA. Component of the SNARP complex which consists at least of SNIP1, SNW1, THRAP3, BCLAF1 and PNN. Component of a MACOM-like complex, named WTAP complex, composed of WTAP, ZC3H13, CBLL1, KIAA1429, RBM15, BCLAF1 and THRAP3. Post-translationally, citrullinated by PADI4. As to expression, ubiquitous.

Its subcellular location is the cytoplasm. The protein resides in the nucleus. The protein localises to the nucleus speckle. It localises to the nucleoplasm. Functionally, death-promoting transcriptional repressor. May be involved in cyclin-D1/CCND1 mRNA stability through the SNARP complex which associates with both the 3'end of the CCND1 gene and its mRNA. The protein is Bcl-2-associated transcription factor 1 (BCLAF1) of Homo sapiens (Human).